An 81-amino-acid polypeptide reads, in one-letter code: ATP synthase subunit c, chloroplastic (81 aa).

2 consecutive transmembrane segments (helical) span residues 3-23 (PLIS…ASIG) and 57-77 (LAFM…LLFA).

Belongs to the ATPase C chain family. In terms of assembly, F-type ATPases have 2 components, F(1) - the catalytic core - and F(0) - the membrane proton channel. F(1) has five subunits: alpha(3), beta(3), gamma(1), delta(1), epsilon(1). F(0) has four main subunits: a(1), b(1), b'(1) and c(10-14). The alpha and beta chains form an alternating ring which encloses part of the gamma chain. F(1) is attached to F(0) by a central stalk formed by the gamma and epsilon chains, while a peripheral stalk is formed by the delta, b and b' chains.

It is found in the plastid. The protein resides in the chloroplast thylakoid membrane. Functionally, f(1)F(0) ATP synthase produces ATP from ADP in the presence of a proton or sodium gradient. F-type ATPases consist of two structural domains, F(1) containing the extramembraneous catalytic core and F(0) containing the membrane proton channel, linked together by a central stalk and a peripheral stalk. During catalysis, ATP synthesis in the catalytic domain of F(1) is coupled via a rotary mechanism of the central stalk subunits to proton translocation. In terms of biological role, key component of the F(0) channel; it plays a direct role in translocation across the membrane. A homomeric c-ring of between 10-14 subunits forms the central stalk rotor element with the F(1) delta and epsilon subunits. This chain is ATP synthase subunit c, chloroplastic, found in Ceratophyllum demersum (Rigid hornwort).